The chain runs to 225 residues: Adenosylcobinamide-GDP ribazoletransferase (225 aa).

A run of 5 helical transmembrane segments spans residues 34 to 54 (FVGI…FWFL), 93 to 113 (NLGT…FYSF), 116 to 136 (VSAF…LLLL), 165 to 185 (PLLL…AITI), and 204 to 224 (VVGA…YFLA).

Belongs to the CobS family. The cofactor is Mg(2+).

It localises to the cell membrane. It carries out the reaction alpha-ribazole + adenosylcob(III)inamide-GDP = adenosylcob(III)alamin + GMP + H(+). The catalysed reaction is alpha-ribazole 5'-phosphate + adenosylcob(III)inamide-GDP = adenosylcob(III)alamin 5'-phosphate + GMP + H(+). Its pathway is cofactor biosynthesis; adenosylcobalamin biosynthesis; adenosylcobalamin from cob(II)yrinate a,c-diamide: step 7/7. Joins adenosylcobinamide-GDP and alpha-ribazole to generate adenosylcobalamin (Ado-cobalamin). Also synthesizes adenosylcobalamin 5'-phosphate from adenosylcobinamide-GDP and alpha-ribazole 5'-phosphate. The polypeptide is Adenosylcobinamide-GDP ribazoletransferase (cobS1) (Archaeoglobus fulgidus (strain ATCC 49558 / DSM 4304 / JCM 9628 / NBRC 100126 / VC-16)).